The sequence spans 479 residues: Aldehyde dehydrogenase family 3 member B2 (479 aa).

Active-site residues include glutamate 223 and cysteine 257. At cysteine 476 the chain carries Cysteine methyl ester. Residue cysteine 476 is the site of S-geranylgeranyl cysteine attachment. The propeptide at 477–479 is removed in mature form; sequence TLL.

Belongs to the aldehyde dehydrogenase family. In terms of processing, geranylgeranylation is important for localization to lipid droplets and enzyme activity. Expressed in testis, white adipose tissue, lung, small intestine, kidney, spleen and liver.

It localises to the lipid droplet. It catalyses the reaction an aldehyde + NAD(+) + H2O = a carboxylate + NADH + 2 H(+). It carries out the reaction a long-chain fatty aldehyde + NAD(+) + H2O = a long-chain fatty acid + NADH + 2 H(+). The enzyme catalyses a medium-chain fatty aldehyde + NAD(+) + H2O = a medium-chain fatty acid + NADH + 2 H(+). The catalysed reaction is hexadecanoate + NADH + 2 H(+) = hexadecanal + NAD(+) + H2O. It catalyses the reaction octanal + NAD(+) + H2O = octanoate + NADH + 2 H(+). It functions in the pathway alcohol metabolism; ethanol degradation; acetate from ethanol: step 2/2. Functionally, oxidizes medium and long chain fatty aldehydes in lipid droplets into non-toxic fatty acids. The chain is Aldehyde dehydrogenase family 3 member B2 from Mus musculus (Mouse).